The following is a 485-amino-acid chain: Probable glycine dehydrogenase (decarboxylating) subunit 2 (485 aa).

N6-(pyridoxal phosphate)lysine is present on lysine 269.

It belongs to the GcvP family. C-terminal subunit subfamily. The glycine cleavage system is composed of four proteins: P, T, L and H. In this organism, the P 'protein' is a heterodimer of two subunits. Pyridoxal 5'-phosphate serves as cofactor.

The enzyme catalyses N(6)-[(R)-lipoyl]-L-lysyl-[glycine-cleavage complex H protein] + glycine + H(+) = N(6)-[(R)-S(8)-aminomethyldihydrolipoyl]-L-lysyl-[glycine-cleavage complex H protein] + CO2. Functionally, the glycine cleavage system catalyzes the degradation of glycine. The P protein binds the alpha-amino group of glycine through its pyridoxal phosphate cofactor; CO(2) is released and the remaining methylamine moiety is then transferred to the lipoamide cofactor of the H protein. This is Probable glycine dehydrogenase (decarboxylating) subunit 2 from Chlorobium phaeovibrioides (strain DSM 265 / 1930) (Prosthecochloris vibrioformis (strain DSM 265)).